A 199-amino-acid polypeptide reads, in one-letter code: N-(5'-phosphoribosyl)anthranilate isomerase (199 aa).

This sequence belongs to the TrpF family.

The enzyme catalyses N-(5-phospho-beta-D-ribosyl)anthranilate = 1-(2-carboxyphenylamino)-1-deoxy-D-ribulose 5-phosphate. It functions in the pathway amino-acid biosynthesis; L-tryptophan biosynthesis; L-tryptophan from chorismate: step 3/5. The polypeptide is N-(5'-phosphoribosyl)anthranilate isomerase (Sulfolobus acidocaldarius (strain ATCC 33909 / DSM 639 / JCM 8929 / NBRC 15157 / NCIMB 11770)).